The following is a 201-amino-acid chain: MIIVIDYDAGNTANVLRALDKLGVKAELSADPQKIVAASGLILPGVGAFPAAMAELEKRGLVAVIKEAVAKGIPLLGICLGMQLLVEKGLEHCETAGFGFISGICQEISAKAGFPVPHMGWNDLQVKQKSALTAGLQGQAVYFVHSYFTDVPQEYIDVTVDYSIEVPAMIHKDNVYGAQFHPEKSGDVGLGILKKFVDLCD.

Residues 1–201 form the Glutamine amidotransferase type-1 domain; sequence MIIVIDYDAG…ILKKFVDLCD (201 aa). The Nucleophile role is filled by cysteine 79. Catalysis depends on residues histidine 181 and glutamate 183.

As to quaternary structure, heterodimer of HisH and HisF.

It localises to the cytoplasm. The catalysed reaction is 5-[(5-phospho-1-deoxy-D-ribulos-1-ylimino)methylamino]-1-(5-phospho-beta-D-ribosyl)imidazole-4-carboxamide + L-glutamine = D-erythro-1-(imidazol-4-yl)glycerol 3-phosphate + 5-amino-1-(5-phospho-beta-D-ribosyl)imidazole-4-carboxamide + L-glutamate + H(+). It carries out the reaction L-glutamine + H2O = L-glutamate + NH4(+). It functions in the pathway amino-acid biosynthesis; L-histidine biosynthesis; L-histidine from 5-phospho-alpha-D-ribose 1-diphosphate: step 5/9. In terms of biological role, IGPS catalyzes the conversion of PRFAR and glutamine to IGP, AICAR and glutamate. The HisH subunit catalyzes the hydrolysis of glutamine to glutamate and ammonia as part of the synthesis of IGP and AICAR. The resulting ammonia molecule is channeled to the active site of HisF. The sequence is that of Imidazole glycerol phosphate synthase subunit HisH from Streptococcus mutans serotype c (strain ATCC 700610 / UA159).